Reading from the N-terminus, the 247-residue chain is ATP synthase subunit a (247 aa).

6 helical membrane passes run 24–44, 82–102, 112–132, 141–161, 181–201, and 206–226; these read IAFT…AAMM, FFPL…VGII, IIVT…YGFY, LFVP…IEII, GHVT…LGFV, and ALLP…VAFL.

Belongs to the ATPase A chain family. As to quaternary structure, F-type ATPases have 2 components, CF(1) - the catalytic core - and CF(0) - the membrane proton channel. CF(1) has five subunits: alpha(3), beta(3), gamma(1), delta(1), epsilon(1). CF(0) has four main subunits: a, b, b' and c.

Its subcellular location is the cell inner membrane. Its function is as follows. Key component of the proton channel; it plays a direct role in the translocation of protons across the membrane. This Bradyrhizobium sp. (strain ORS 278) protein is ATP synthase subunit a.